We begin with the raw amino-acid sequence, 637 residues long: Penicillin-binding protein 1A (637 aa).

The tract at residues 62-224 is transglycosylase; it reads LIADLGSERR…NQYDPYSHPE (163 aa). Glutamate 91 functions as the Proton donor; for transglycosylase activity in the catalytic mechanism. A transpeptidase region spans residues 298–612; that stretch reads EVYTNVDSKV…RLTPIVGDGF (315 aa). Residue serine 371 is the Acyl-ester intermediate; for transpeptidase activity of the active site.

In the N-terminal section; belongs to the glycosyltransferase 51 family. This sequence in the C-terminal section; belongs to the transpeptidase family.

The protein resides in the secreted. It carries out the reaction [GlcNAc-(1-&gt;4)-Mur2Ac(oyl-L-Ala-gamma-D-Glu-L-Lys-D-Ala-D-Ala)](n)-di-trans,octa-cis-undecaprenyl diphosphate + beta-D-GlcNAc-(1-&gt;4)-Mur2Ac(oyl-L-Ala-gamma-D-Glu-L-Lys-D-Ala-D-Ala)-di-trans,octa-cis-undecaprenyl diphosphate = [GlcNAc-(1-&gt;4)-Mur2Ac(oyl-L-Ala-gamma-D-Glu-L-Lys-D-Ala-D-Ala)](n+1)-di-trans,octa-cis-undecaprenyl diphosphate + di-trans,octa-cis-undecaprenyl diphosphate + H(+). The catalysed reaction is Preferential cleavage: (Ac)2-L-Lys-D-Ala-|-D-Ala. Also transpeptidation of peptidyl-alanyl moieties that are N-acyl substituents of D-alanine.. It functions in the pathway cell wall biogenesis; peptidoglycan biosynthesis. Functionally, cell wall formation. This is Penicillin-binding protein 1A (ponA) from Streptococcus oralis.